The primary structure comprises 507 residues: Histidine ammonia-lyase (507 aa).

Positions 141–143 (ASG) form a cross-link, 5-imidazolinone (Ala-Gly). At serine 142 the chain carries 2,3-didehydroalanine (Ser).

Belongs to the PAL/histidase family. In terms of processing, contains an active site 4-methylidene-imidazol-5-one (MIO), which is formed autocatalytically by cyclization and dehydration of residues Ala-Ser-Gly.

The protein resides in the cytoplasm. It carries out the reaction L-histidine = trans-urocanate + NH4(+). Its pathway is amino-acid degradation; L-histidine degradation into L-glutamate; N-formimidoyl-L-glutamate from L-histidine: step 1/3. This Burkholderia ambifaria (strain MC40-6) protein is Histidine ammonia-lyase.